A 106-amino-acid polypeptide reads, in one-letter code: Large ribosomal subunit protein uL24 (106 aa).

This sequence belongs to the universal ribosomal protein uL24 family. As to quaternary structure, part of the 50S ribosomal subunit.

In terms of biological role, one of two assembly initiator proteins, it binds directly to the 5'-end of the 23S rRNA, where it nucleates assembly of the 50S subunit. Its function is as follows. One of the proteins that surrounds the polypeptide exit tunnel on the outside of the subunit. The polypeptide is Large ribosomal subunit protein uL24 (Polaromonas sp. (strain JS666 / ATCC BAA-500)).